Consider the following 149-residue polypeptide: Nucleoside diphosphate kinase (149 aa).

ATP-binding residues include Lys9, Phe57, Arg85, Thr91, Arg102, and Asn112. The active-site Pros-phosphohistidine intermediate is His115.

Belongs to the NDK family. Mg(2+) serves as cofactor.

It is found in the cytoplasm. The enzyme catalyses a 2'-deoxyribonucleoside 5'-diphosphate + ATP = a 2'-deoxyribonucleoside 5'-triphosphate + ADP. It catalyses the reaction a ribonucleoside 5'-diphosphate + ATP = a ribonucleoside 5'-triphosphate + ADP. Functionally, major role in the synthesis of nucleoside triphosphates other than ATP. The ATP gamma phosphate is transferred to the NDP beta phosphate via a ping-pong mechanism, using a phosphorylated active-site intermediate. The polypeptide is Nucleoside diphosphate kinase (Methanosarcina barkeri (strain Fusaro / DSM 804)).